Here is a 644-residue protein sequence, read N- to C-terminus: SURP and G-patch domain-containing protein 1 (644 aa).

Residues 44 to 54 (REIEARMEQKA) are compositionally biased toward basic and acidic residues. Disordered stretches follow at residues 44 to 74 (REIE…ADAQ) and 98 to 122 (AQAS…KRPL). At Thr128 the chain carries Phosphothreonine. The SURP motif 1 repeat unit spans residues 188 to 230 (VIEKLARFVAEGGPELEKVAMEDYKDNPAFTFLHDKNSREFLY). Phosphoserine is present on Ser253. The SURP motif 2 repeat unit spans residues 263-306 (LAEKLARFIADGGPEVETIALQNNRENQAFSFLYDPNSQGYRYY). 2 disordered regions span residues 316–342 (AKAG…PEAL) and 360–412 (PAVN…PSPL). Ser323 carries the post-translational modification Phosphoserine. Residues 360 to 369 (PAVNPTPSIP) are compositionally biased toward pro residues. The Nuclear localization signal signature appears at 379–385 (KRKRKSR). Residues Ser408, Ser410, Ser413, and Ser484 each carry the phosphoserine modification. One can recognise a G-patch domain in the interval 561–608 (VENIGYQMLMKMGWKEGEGLGTEGQGIKNPVNKGATTIDGAGFGIDRP).

Component of the spliceosome.

The protein resides in the nucleus. In terms of biological role, plays a role in pre-mRNA splicing. This chain is SURP and G-patch domain-containing protein 1 (Sugp1), found in Rattus norvegicus (Rat).